The chain runs to 147 residues: Phosphoribosyl-AMP cyclohydrolase 2 (147 aa).

Asp-99 is a Mg(2+) binding site. Residue Cys-100 participates in Zn(2+) binding. Residues Asp-101 and Asp-103 each coordinate Mg(2+). 2 residues coordinate Zn(2+): Cys-116 and Cys-123.

It belongs to the PRA-CH family. As to quaternary structure, homodimer. It depends on Mg(2+) as a cofactor. Zn(2+) serves as cofactor.

The protein localises to the cytoplasm. The catalysed reaction is 1-(5-phospho-beta-D-ribosyl)-5'-AMP + H2O = 1-(5-phospho-beta-D-ribosyl)-5-[(5-phospho-beta-D-ribosylamino)methylideneamino]imidazole-4-carboxamide. Its pathway is amino-acid biosynthesis; L-histidine biosynthesis; L-histidine from 5-phospho-alpha-D-ribose 1-diphosphate: step 3/9. Functionally, catalyzes the hydrolysis of the adenine ring of phosphoribosyl-AMP. The chain is Phosphoribosyl-AMP cyclohydrolase 2 from Pseudomonas fluorescens (strain ATCC BAA-477 / NRRL B-23932 / Pf-5).